The following is a 400-amino-acid chain: WW domain-containing transcription regulator protein 1 (400 aa).

K46 participates in a covalent cross-link: Glycyl lysine isopeptide (Lys-Gly) (interchain with G-Cter in ubiquitin). Residues 52–117 (FFKEPDSGSH…QQHAHLRQQS (66 aa)) are disordered. Polar residues predominate over residues 61–70 (HSRQSSTDSS). A Phosphoserine modification is found at S62. S89 bears the Phosphoserine; by LATS2 mark. At S105 the chain carries Phosphoserine. The WW domain occupies 124 to 157 (LPLPPGWEMTFTATGQRYFLNHIEKITTWQDPRK). Residues 222–400 (PNALTTQQQQ…NKSEPFLTWL (179 aa)) form a required for interaction with PALS1 region. Positions 225-259 (LTTQQQQQQKLRLQRIQMERERIRMRQEELMRQEA) form a coiled coil. S295 carries the phosphoserine modification. The residue at position 311 (S311) is a Phosphoserine; by LATS2. A PDZ-binding motif is present at residues 394–400 (EPFLTWL).

Binds to SLC9A3R2 via the PDZ motif at the plasma membrane. Binds to YWHAZ in vivo and in vitro through the phosphoserine-binding motif RSHSSP. Interacts (via coiled-coil domain) with SMAD2 (via MH1 domain), SMAD3 and SMAD4. Interacts with MED15. Interacts with PAX8 and NKX2-1. Interacts with TEAD1, TEAD2, TEAD3 and TEAD4. Interacts (via WW domain) with PALS1. Interacts with LATS1. Interacts with YAP1 (when phosphorylated at 'Ser-127'). Interacts (via WW domain) with PRRG4 (via cytoplasmic domain). Interacts (via WW domain) with AMOTL2 (via PPXY motif); the interaction promotes WWTR1/TAZ localization to the cytoplasm and tight junctions, thereby inhibiting its transcriptional coactivator properties. Interacts (via WW domain) with AMOT isoform 1; the interaction facilitates translocation of WWTR1/TAZ to the cytoplasm. In terms of processing, phosphorylated by LATS2 and STK3/MST2. Phosphorylation by LATS2 results in creation of 14-3-3 binding sites, retention in the cytoplasm, and functional inactivation. Phosphorylation results in the inhibition of transcriptional coactivation through YWHAZ-mediated nuclear export. Phosphorylated in the nucleus by PRP4K; phosphorylation leads to nuclear exclusion. Post-translationally, ubiquitinated at Lys-46; leading to proteasomal degradation. Deubiquitinated and stabilized by UCHL1 at Lys-46; leading to inhibition of osteoclastogenesis. Highly expressed in kidney, heart, placenta and lung. Expressed in the thyroid tissue.

It localises to the nucleus. The protein localises to the cytoplasm. The protein resides in the cell membrane. It is found in the cell junction. Its subcellular location is the tight junction. In terms of biological role, transcriptional coactivator which acts as a downstream regulatory target in the Hippo signaling pathway that plays a pivotal role in organ size control and tumor suppression by restricting proliferation and promoting apoptosis. The core of this pathway is composed of a kinase cascade wherein STK3/MST2 and STK4/MST1, in complex with its regulatory protein SAV1, phosphorylates and activates LATS1/2 in complex with its regulatory protein MOB1, which in turn phosphorylates and inactivates YAP1 oncoprotein and WWTR1/TAZ. WWTR1 enhances PAX8 and NKX2-1/TTF1-dependent gene activation. In conjunction with YAP1, involved in the regulation of TGFB1-dependent SMAD2 and SMAD3 nuclear accumulation. Plays a key role in coupling SMADs to the transcriptional machinery such as the mediator complex. Regulates embryonic stem-cell self-renewal, promotes cell proliferation and epithelial-mesenchymal transition. The polypeptide is WW domain-containing transcription regulator protein 1 (Homo sapiens (Human)).